Reading from the N-terminus, the 597-residue chain is Elongation factor 4 (597 aa).

The 178-residue stretch at 4–181 (SKIRNFSIIA…AIVDYVPAPK (178 aa)) folds into the tr-type G domain. GTP-binding positions include 16–21 (DHGKST) and 128–131 (NKID).

This sequence belongs to the TRAFAC class translation factor GTPase superfamily. Classic translation factor GTPase family. LepA subfamily.

It localises to the cell membrane. The enzyme catalyses GTP + H2O = GDP + phosphate + H(+). Its function is as follows. Required for accurate and efficient protein synthesis under certain stress conditions. May act as a fidelity factor of the translation reaction, by catalyzing a one-codon backward translocation of tRNAs on improperly translocated ribosomes. Back-translocation proceeds from a post-translocation (POST) complex to a pre-translocation (PRE) complex, thus giving elongation factor G a second chance to translocate the tRNAs correctly. Binds to ribosomes in a GTP-dependent manner. The polypeptide is Elongation factor 4 (Mycoplasmopsis agalactiae (strain NCTC 10123 / CIP 59.7 / PG2) (Mycoplasma agalactiae)).